We begin with the raw amino-acid sequence, 481 residues long: Argininosuccinate lyase (481 aa).

This sequence belongs to the lyase 1 family. Argininosuccinate lyase subfamily.

It localises to the cytoplasm. It catalyses the reaction 2-(N(omega)-L-arginino)succinate = fumarate + L-arginine. Its pathway is amino-acid biosynthesis; L-arginine biosynthesis; L-arginine from L-ornithine and carbamoyl phosphate: step 3/3. This chain is Argininosuccinate lyase, found in Methanococcus maripaludis (strain C6 / ATCC BAA-1332).